A 192-amino-acid chain; its full sequence is Large ribosomal subunit protein bL9 (192 aa).

The tract at residues 172 to 192 is disordered; the sequence is DALRPEDFFDPEADGVDEDEA. A compositionally biased stretch (acidic residues) spans 179 to 192; it reads FFDPEADGVDEDEA.

Belongs to the bacterial ribosomal protein bL9 family.

Its function is as follows. Binds to the 23S rRNA. In Rhizobium leguminosarum bv. trifolii (strain WSM2304), this protein is Large ribosomal subunit protein bL9.